The primary structure comprises 492 residues: Probable small intestine urate exporter (492 aa).

The disordered stretch occupies residues 1–20 (MSTGADLKAREGDIPSDNMT). 6 N-linked (GlcNAc...) asparagine glycosylation sites follow: Asn-18, Asn-44, Asn-53, Asn-63, Asn-72, and Asn-87. Transmembrane regions (helical) follow at residues 112-132 (LSYGSFIAPIPTGYVAGVFGA), 134-154 (YVVGLGLLISSVLTLFIPLAA), 156-176 (AGVALLIVLRVIQGMAQVMVL), 198-218 (IAASGSMLGTFLVLIAGGLIC), 225-245 (YIFYIFGGIGCACCLLWFPLV), 287-307 (LPLWAIVVSYFCEYWLLSTVM), 327-347 (ILSALPFMFGCVCIILGGLLA), 363-383 (KLFTAVGVLASSGILLPLPWV), 393-413 (FLVLSSVFASLCDSGALINFL), 426-446 (LLQVFSYLAGGIAPTVAGFFI), and 456-476 (NVFFLAAAIDVVGLLFYLIFS).

This sequence belongs to the major facilitator superfamily. Sodium/anion cotransporter family. In terms of tissue distribution, expressed in the small intestine (at protein level).

It is found in the apical cell membrane. It carries out the reaction 3 Na(+)(out) + phosphate(out) = 3 Na(+)(in) + phosphate(in). The enzyme catalyses urate(out) + n chloride(in) = urate(in) + n chloride(out). It catalyses the reaction L-thyroxine(out) = L-thyroxine(in). The catalysed reaction is 3,3',5-triiodo-L-thyronine(out) = 3,3',5-triiodo-L-thyronine(in). Its function is as follows. Acts as a membrane potential-dependent organic anion transporter, the transport requires a low concentration of chloride ions. Mediates chloride-dependent transport of urate. Mediates sodium-independent high affinity transport of thyroid hormones including L-thyroxine (T4) and 3,3',5-triiodo-L-thyronine (T3). Can actively transport inorganic phosphate into cells via Na(+) cotransport. The sequence is that of Probable small intestine urate exporter (Slc17a4) from Mus musculus (Mouse).